The following is a 138-amino-acid chain: Small ribosomal subunit protein uS11c (138 aa).

The segment at 1-22 (MAKAIPKISSRRNGRIGSRKGA) is disordered. Over residues 9–22 (SSRRNGRIGSRKGA) the composition is skewed to basic residues.

It belongs to the universal ribosomal protein uS11 family. In terms of assembly, part of the 30S ribosomal subunit.

It localises to the plastid. It is found in the chloroplast. This chain is Small ribosomal subunit protein uS11c, found in Nicotiana tabacum (Common tobacco).